The primary structure comprises 338 residues: Tryptophan--tRNA ligase (338 aa).

Residues 11–13 and 19–20 each bind ATP; these read QPS and GN. The short motif at 12–20 is the 'HIGH' region element; it reads PSGELSIGN. Position 135 (Asp-135) interacts with L-tryptophan. ATP is bound by residues 147–149, Val-189, and 198–202; these read GSD and KMSKS. Positions 198–202 match the 'KMSKS' region motif; sequence KMSKS.

This sequence belongs to the class-I aminoacyl-tRNA synthetase family. Homodimer.

Its subcellular location is the cytoplasm. It catalyses the reaction tRNA(Trp) + L-tryptophan + ATP = L-tryptophyl-tRNA(Trp) + AMP + diphosphate + H(+). Its function is as follows. Catalyzes the attachment of tryptophan to tRNA(Trp). The protein is Tryptophan--tRNA ligase of Vibrio parahaemolyticus serotype O3:K6 (strain RIMD 2210633).